We begin with the raw amino-acid sequence, 294 residues long: Diaminopimelate epimerase (294 aa).

Residues Asn11 and Asn78 each contribute to the substrate site. The active-site Proton donor is the Cys87. Residues 88–89 (GN), Asn167, Asn203, and 221–222 (ER) contribute to the substrate site. Cys230 functions as the Proton acceptor in the catalytic mechanism. 231-232 (GT) is a binding site for substrate.

It belongs to the diaminopimelate epimerase family. In terms of assembly, homodimer.

The protein localises to the cytoplasm. The catalysed reaction is (2S,6S)-2,6-diaminopimelate = meso-2,6-diaminopimelate. The protein operates within amino-acid biosynthesis; L-lysine biosynthesis via DAP pathway; DL-2,6-diaminopimelate from LL-2,6-diaminopimelate: step 1/1. Catalyzes the stereoinversion of LL-2,6-diaminopimelate (L,L-DAP) to meso-diaminopimelate (meso-DAP), a precursor of L-lysine and an essential component of the bacterial peptidoglycan. The protein is Diaminopimelate epimerase of Mycobacterium avium (strain 104).